We begin with the raw amino-acid sequence, 197 residues long: dTTP/UTP pyrophosphatase (197 aa).

The Proton acceptor role is filled by D69.

It belongs to the Maf family. YhdE subfamily. A divalent metal cation is required as a cofactor.

The protein resides in the cytoplasm. It carries out the reaction dTTP + H2O = dTMP + diphosphate + H(+). It catalyses the reaction UTP + H2O = UMP + diphosphate + H(+). Nucleoside triphosphate pyrophosphatase that hydrolyzes dTTP and UTP. May have a dual role in cell division arrest and in preventing the incorporation of modified nucleotides into cellular nucleic acids. The sequence is that of dTTP/UTP pyrophosphatase from Lachnoclostridium phytofermentans (strain ATCC 700394 / DSM 18823 / ISDg) (Clostridium phytofermentans).